Here is a 188-residue protein sequence, read N- to C-terminus: Protein GrpE 2 (188 aa).

Belongs to the GrpE family. As to quaternary structure, homodimer.

The protein resides in the cytoplasm. In terms of biological role, participates actively in the response to hyperosmotic and heat shock by preventing the aggregation of stress-denatured proteins, in association with DnaK and GrpE. It is the nucleotide exchange factor for DnaK and may function as a thermosensor. Unfolded proteins bind initially to DnaJ; upon interaction with the DnaJ-bound protein, DnaK hydrolyzes its bound ATP, resulting in the formation of a stable complex. GrpE releases ADP from DnaK; ATP binding to DnaK triggers the release of the substrate protein, thus completing the reaction cycle. Several rounds of ATP-dependent interactions between DnaJ, DnaK and GrpE are required for fully efficient folding. This is Protein GrpE 2 from Buchnera aphidicola subsp. Acyrthosiphon pisum (strain APS) (Acyrthosiphon pisum symbiotic bacterium).